Here is a 154-residue protein sequence, read N- to C-terminus: Anaerobic ribonucleoside-triphosphate reductase-activating protein (154 aa).

The [4Fe-4S] cluster site is built by C26, C30, and C33. S-adenosyl-L-methionine-binding positions include G32–Y34 and G74.

Belongs to the organic radical-activating enzymes family. As to quaternary structure, forms a tetramer composed of two NrdD and two NrdG subunits. [4Fe-4S] cluster is required as a cofactor.

The protein localises to the cytoplasm. It catalyses the reaction glycyl-[protein] + reduced [flavodoxin] + S-adenosyl-L-methionine = glycin-2-yl radical-[protein] + semiquinone [flavodoxin] + 5'-deoxyadenosine + L-methionine + H(+). Its function is as follows. Activation of anaerobic ribonucleoside-triphosphate reductase under anaerobic conditions by generation of an organic free radical, using S-adenosylmethionine and reduced flavodoxin as cosubstrates to produce 5'-deoxy-adenosine. This is Anaerobic ribonucleoside-triphosphate reductase-activating protein (nrdG) from Salmonella typhi.